We begin with the raw amino-acid sequence, 777 residues long: Homoaconitase, mitochondrial (777 aa).

The N-terminal 35 residues, 1-35, are a transit peptide targeting the mitochondrion; sequence MFKRTGSLLLRCRASRVPVIGRPLISLSTSSTSLS. The interval 47-74 is disordered; it reads LRRYTEASSSTTQTSPSSSSWPAPDAAP. The span at 52–74 shows a compositional bias: low complexity; that stretch reads EASSSTTQTSPSSSSWPAPDAAP. Residues cysteine 398, cysteine 466, and cysteine 469 each contribute to the [4Fe-4S] cluster site.

It belongs to the aconitase/IPM isomerase family. [4Fe-4S] cluster serves as cofactor.

It is found in the mitochondrion. It carries out the reaction (2R,3S)-homoisocitrate = cis-homoaconitate + H2O. The protein operates within amino-acid biosynthesis; L-lysine biosynthesis via AAA pathway; L-alpha-aminoadipate from 2-oxoglutarate: step 3/5. Catalyzes the reversible hydration of cis-homoaconitate to (2R,3S)-homoisocitrate, a step in the alpha-aminoadipate pathway for lysine biosynthesis. The polypeptide is Homoaconitase, mitochondrial (lys4) (Aspergillus fumigatus (strain ATCC MYA-4609 / CBS 101355 / FGSC A1100 / Af293) (Neosartorya fumigata)).